A 303-amino-acid chain; its full sequence is Coenzyme PQQ synthesis protein B (303 aa).

The protein belongs to the PqqB family.

It participates in cofactor biosynthesis; pyrroloquinoline quinone biosynthesis. In terms of biological role, may be involved in the transport of PQQ or its precursor to the periplasm. This chain is Coenzyme PQQ synthesis protein B, found in Pseudomonas putida (strain ATCC 47054 / DSM 6125 / CFBP 8728 / NCIMB 11950 / KT2440).